The sequence spans 297 residues: Tryptophan 2,3-dioxygenase (297 aa).

Residues 51 to 55 (FIIQH), Y113, and R117 contribute to the substrate site. H240 provides a ligand contact to heme. T254 serves as a coordination point for substrate.

It belongs to the tryptophan 2,3-dioxygenase family. As to quaternary structure, homotetramer. Heme serves as cofactor.

It catalyses the reaction L-tryptophan + O2 = N-formyl-L-kynurenine. The protein operates within amino-acid degradation; L-tryptophan degradation via kynurenine pathway; L-kynurenine from L-tryptophan: step 1/2. In terms of biological role, heme-dependent dioxygenase that catalyzes the oxidative cleavage of the L-tryptophan (L-Trp) pyrrole ring and converts L-tryptophan to N-formyl-L-kynurenine. Catalyzes the oxidative cleavage of the indole moiety. This Xanthomonas oryzae pv. oryzae (strain MAFF 311018) protein is Tryptophan 2,3-dioxygenase.